A 163-amino-acid polypeptide reads, in one-letter code: NADH-quinone oxidoreductase subunit I (163 aa).

4Fe-4S ferredoxin-type domains follow at residues 55-84 (RRYE…IESE) and 94-123 (TQYD…ETRV). Residues C64, C67, C70, C74, C103, C106, C109, and C113 each coordinate [4Fe-4S] cluster.

This sequence belongs to the complex I 23 kDa subunit family. As to quaternary structure, NDH-1 is composed of 14 different subunits. Subunits NuoA, H, J, K, L, M, N constitute the membrane sector of the complex. Requires [4Fe-4S] cluster as cofactor.

The protein resides in the cell inner membrane. The enzyme catalyses a quinone + NADH + 5 H(+)(in) = a quinol + NAD(+) + 4 H(+)(out). Functionally, NDH-1 shuttles electrons from NADH, via FMN and iron-sulfur (Fe-S) centers, to quinones in the respiratory chain. The immediate electron acceptor for the enzyme in this species is believed to be ubiquinone. Couples the redox reaction to proton translocation (for every two electrons transferred, four hydrogen ions are translocated across the cytoplasmic membrane), and thus conserves the redox energy in a proton gradient. The chain is NADH-quinone oxidoreductase subunit I from Hydrogenovibrio crunogenus (strain DSM 25203 / XCL-2) (Thiomicrospira crunogena).